The chain runs to 218 residues: Small ribosomal subunit protein uS3 (218 aa).

In terms of domain architecture, KH type-2 spans 38-106 (IRTFLKKKLY…KLVVDIKEVK (69 aa)).

Belongs to the universal ribosomal protein uS3 family. As to quaternary structure, part of the 30S ribosomal subunit. Forms a tight complex with proteins S10 and S14.

Its function is as follows. Binds the lower part of the 30S subunit head. Binds mRNA in the 70S ribosome, positioning it for translation. The polypeptide is Small ribosomal subunit protein uS3 (Agathobacter rectalis (strain ATCC 33656 / DSM 3377 / JCM 17463 / KCTC 5835 / VPI 0990) (Eubacterium rectale)).